A 221-amino-acid chain; its full sequence is Protein GrpE 1 (221 aa).

2 disordered regions span residues 1–44 (MTEE…AAAQ) and 192–221 (VAEP…PEEG). Positions 26–44 (KAAPSEGAAPAGDAAAAAQ) are enriched in low complexity. A compositionally biased stretch (basic and acidic residues) spans 203–221 (KADEAEAADDKESGGPEEG).

Belongs to the GrpE family. In terms of assembly, homodimer.

Its subcellular location is the cytoplasm. Functionally, participates actively in the response to hyperosmotic and heat shock by preventing the aggregation of stress-denatured proteins, in association with DnaK and GrpE. It is the nucleotide exchange factor for DnaK and may function as a thermosensor. Unfolded proteins bind initially to DnaJ; upon interaction with the DnaJ-bound protein, DnaK hydrolyzes its bound ATP, resulting in the formation of a stable complex. GrpE releases ADP from DnaK; ATP binding to DnaK triggers the release of the substrate protein, thus completing the reaction cycle. Several rounds of ATP-dependent interactions between DnaJ, DnaK and GrpE are required for fully efficient folding. The sequence is that of Protein GrpE 1 from Streptomyces avermitilis (strain ATCC 31267 / DSM 46492 / JCM 5070 / NBRC 14893 / NCIMB 12804 / NRRL 8165 / MA-4680).